Here is a 469-residue protein sequence, read N- to C-terminus: UDP-N-acetylmuramate--L-alanine ligase (469 aa).

An ATP-binding site is contributed by 122-128 (GTHGKTT).

The protein belongs to the MurCDEF family.

Its subcellular location is the cytoplasm. The enzyme catalyses UDP-N-acetyl-alpha-D-muramate + L-alanine + ATP = UDP-N-acetyl-alpha-D-muramoyl-L-alanine + ADP + phosphate + H(+). The protein operates within cell wall biogenesis; peptidoglycan biosynthesis. Functionally, cell wall formation. The sequence is that of UDP-N-acetylmuramate--L-alanine ligase from Legionella pneumophila (strain Paris).